A 1017-amino-acid polypeptide reads, in one-letter code: Voltage-gated delayed rectifier potassium channel KCNH4 (1017 aa).

Residues 1–232 (MPVMKGLLAP…YSIPKAVWDG (232 aa)) are Cytoplasmic-facing. The 77-residue stretch at 14-90 (FLDTIATRFD…QRLQKALEGH (77 aa)) folds into the PAS domain. Residues 93-145 (HRAEICFYRKDGSAFWCLLDMMPIKNELGEVVLFLFSFKDISQSGGPGLGSPG) enclose the PAC domain. The segment at 139–170 (PGLGSPGIHGDNNNHENSLGRRGASSRLRSTR) is disordered. The helical transmembrane segment at 233 to 253 (LILLATFYVAVTVPYNVCFAG) threads the bilayer. Residues 254 to 262 (DDDTPITSR) are Extracellular-facing. A helical membrane pass occupies residues 263 to 283 (HTLVSDIAVEMLFILDIILNF). Residues 284-305 (RTTYVSQSGQVVSAPRSIGLHY) are Cytoplasmic-facing. Residues 306–326 (LATWFFVDLIAALPFDLLYVF) form a helical membrane-spanning segment. Topologically, residues 327-334 (NITVTSLV) are extracellular. The chain crosses the membrane as a helical; Voltage-sensor span at residues 335–355 (HLLKTVRLLRLLRLLQKLERY). The Cytoplasmic portion of the chain corresponds to 356–364 (SQCSAVVLT). Residues 365 to 385 (LLMSVFALLAHWMACVWYVIG) form a helical membrane-spanning segment. At 386-427 (RREMEANDPLLWDIGWLHELGKRLEEPYVNGSAGGPSRRSAY) the chain is on the extracellular side. Residue N415 is glycosylated (N-linked (GlcNAc...) asparagine). Residues 428-448 (IAALYFTLSSLTSVGFGNVCA) constitute an intramembrane region (pore-forming). The Selectivity filter signature appears at 440–445 (SVGFGN). The Extracellular segment spans residues 449–454 (NTDAEK). The chain crosses the membrane as a helical span at residues 455-475 (IFSICTMLIGALMHAVVFGNV). At 476 to 1017 (TAIIQRMYSR…SFQSGSDTFH (542 aa)) the chain is on the cytoplasmic side. The segment at 557-621 (LFGAASRGCL…AILGKGDLIG (65 aa)) is cNMP-binding domain. 2 disordered regions span residues 690-749 (GSEN…PNLS) and 771-870 (LVSS…ELAT). Residues 703-726 (PRLSQARSDTLGSSSDKTLPSITE) are compositionally biased toward polar residues. Composition is skewed to low complexity over residues 771–786 (LVSS…PALA) and 806–820 (PPQL…FGPP). A coiled-coil region spans residues 873–907 (AEEVKEKVCRLNQEISRLNQEVSQLSRELRQVMGL). The tract at residues 972 to 1017 (SELRSSMVPPFPSEPDPLGPSPVPEASPLTPSLLKHSFQSGSDTFH) is disordered. Pro residues predominate over residues 980-996 (PPFPSEPDPLGPSPVPE). Residues 1008–1017 (SFQSGSDTFH) show a composition bias toward polar residues.

It belongs to the potassium channel family. H (Eag) (TC 1.A.1.20) subfamily. Kv12.3/KCNH4 sub-subfamily. In terms of assembly, the potassium channel is probably composed of a homo- or heterotetrameric complex of pore-forming alpha subunits that can associate with modulating beta subunits. As to expression, highly expressed in adult testis, and in adult and embryonic brain. In adult brain found in piriform cortex, olfactory tubercle, cerebral cortex, hippocampus pyramidial cells and dentate gyrus and basal ganglia of caudate/putamen and accumbens nucleus. Detected at intermediate levels in lung, spinal cord, and pituitary.

It localises to the membrane. The catalysed reaction is K(+)(in) = K(+)(out). Its function is as follows. Pore-forming (alpha) subunit of a voltage-gated delayed rectifier. Activates at more negative voltages, exhibits fast prepulse-independent activation kinetics and deactivates much more slowly, but shows no inactivation. The polypeptide is Voltage-gated delayed rectifier potassium channel KCNH4 (Rattus norvegicus (Rat)).